The sequence spans 129 residues: Large ribosomal subunit protein eL31 (129 aa).

Residues 1 to 46 (MSQETTATKQEEQKTSELQQQKKEEQKPQQATTTTKEEKKTKPEKE) are disordered. 2 stretches are compositionally biased toward basic and acidic residues: residues 9–27 (KQEE…EEQK) and 35–46 (TKEEKKTKPEKE).

It belongs to the eukaryotic ribosomal protein eL31 family.

This Sulfolobus acidocaldarius (strain ATCC 33909 / DSM 639 / JCM 8929 / NBRC 15157 / NCIMB 11770) protein is Large ribosomal subunit protein eL31 (rpl31e).